Reading from the N-terminus, the 541-residue chain is MAVAEIKKEKGSSLSPEPSSPIQILSTEPDANTDIKQEKFTPKDILPGCKVHVSKDGEFRLAEILQEHIKKGRKVFYVHYQDFNKRLDEWIELDRIDFTRSLILPEIKADTKENKSKKKSKSKGQTKLSKNNTTANSTTGTPQPSDGQPIMGDDEMDLENLNVQGLKRPGEEFSREDEIKKLRTSGSMTQNHSEVARVRNLSTIILGEHIIEPWYFSPYPIELTEEDEIYICDFTLSYFGSKKQFERFRSKCSMKHPPGNEIYRDSKVSFWEIDGRKQRTWCRNLCLLSKLFLDHKTLYYDVDPFLFYIMTIKSDQGHHVVGYFSKEKESADGYNVACILTLPCYQKRGFGKLLIQFSYMLTKVERKVGSPEKPLSDLGLLSYRAYWTDTLVKLLVERNSPALFRKNNSQLEYDEAENGKDSSATPTPGPGSNASQSSILASAAASRSGLNSSPIFSNEITIEDISSITCMTTTDILHTLTTLQMLRYYKGQHIIVLTDQIMELYEKLVKKVKEKKKHELNPKLLHWTPPSFTANQLRFGW.

Over residues 1–11 (MAVAEIKKEKG) the composition is skewed to basic and acidic residues. The interval 1 to 31 (MAVAEIKKEKGSSLSPEPSSPIQILSTEPDA) is disordered. Positions 12–30 (SSLSPEPSSPIQILSTEPD) are enriched in polar residues. The Tudor-knot domain occupies 47 to 97 (PGCKVHVSKDGEFRLAEILQEHIKKGRKVFYVHYQDFNKRLDEWIELDRID). Positions 111–154 (TKENKSKKKSKSKGQTKLSKNNTTANSTTGTPQPSDGQPIMGDD) are disordered. Residues 115–124 (KSKKKSKSKG) show a composition bias toward basic residues. Polar residues predominate over residues 131 to 146 (NNTTANSTTGTPQPSD). One can recognise an MYST-type HAT domain in the interval 196-529 (ARVRNLSTII…LNPKLLHWTP (334 aa)). The C2HC MYST-type; degenerate zinc-finger motif lies at 229–254 (IYICDFTLSYFGSKKQFERFRSKCSM). Positions 279-300 (RTWCRNLCLLSKLFLDHKTLYY) match the ESA1-RPD3 motif motif. Lys-296 carries the post-translational modification N6-acetyllysine; by autocatalysis. Acetyl-CoA is bound by residues 337-341 (ACILT) and 346-352 (QKRGFGK). The active-site Proton donor/acceptor is the Glu-372. Ser-376 lines the acetyl-CoA pocket. The disordered stretch occupies residues 413 to 438 (YDEAENGKDSSATPTPGPGSNASQSS).

Belongs to the MYST (SAS/MOZ) family. As to quaternary structure, component of the NuA4 histone acetyltransferase complex. Post-translationally, autoacetylation at Lys-296 is required for proper function.

The protein resides in the nucleus. It localises to the chromosome. The enzyme catalyses L-lysyl-[histone] + acetyl-CoA = N(6)-acetyl-L-lysyl-[histone] + CoA + H(+). The catalysed reaction is L-lysyl-[protein] + acetyl-CoA = N(6)-acetyl-L-lysyl-[protein] + CoA + H(+). It carries out the reaction 2-hydroxyisobutanoyl-CoA + L-lysyl-[protein] = N(6)-(2-hydroxyisobutanoyl)-L-lysyl-[protein] + CoA + H(+). It catalyses the reaction (2E)-butenoyl-CoA + L-lysyl-[protein] = N(6)-(2E)-butenoyl-L-lysyl-[protein] + CoA + H(+). Functionally, catalytic component of the NuA4 histone acetyltransferase (HAT) complex which is involved in epigenetic transcriptional activation of selected genes principally by acetylation of nucleosomal histones H4, H3, H2B, H2A and H2A variant H2A.Z. Acetylates histone H4 to form H4K5ac, H4K8ac, H4K12ac and H4K16ac, histone H3 to form H3K14ac, and histone H2A to form H2AK4ac and H2AK7ac. The NuA4 complex is involved in the DNA damage response and is required for chromosome segregation. The NuA4 complex plays a direct role in repair of DNA double-strand breaks (DSBs) through homologous recombination. Recruitment to promoters depends on H3K4me. Also acetylates non-histone proteins. In addition to protein acetyltransferase, can use different acyl-CoA substrates, such as 2-hydroxyisobutanoyl-CoA (2-hydroxyisobutyryl-CoA) or (2E)-butenoyl-CoA (crotonyl-CoA), and is able to mediate protein 2-hydroxyisobutyrylation and crotonylation, respectively. The sequence is that of Histone acetyltransferase ESA1 (ESA1) from Candida albicans (strain SC5314 / ATCC MYA-2876) (Yeast).